A 68-amino-acid polypeptide reads, in one-letter code: Large ribosomal subunit protein bL33c (68 aa).

This sequence belongs to the bacterial ribosomal protein bL33 family.

It is found in the plastid. The protein localises to the chloroplast. This chain is Large ribosomal subunit protein bL33c, found in Nymphaea alba (White water-lily).